The primary structure comprises 1624 residues: Putative serine/threonine-protein kinase/receptor R831 (1624 aa).

The first 25 residues, 1 to 25, serve as a signal peptide directing secretion; that stretch reads MHSVYTKYTIILILLVIYQGLPTNT. Residues asparagine 152, asparagine 169, asparagine 200, asparagine 205, asparagine 225, asparagine 240, asparagine 245, asparagine 292, asparagine 364, asparagine 479, asparagine 541, asparagine 720, and asparagine 737 are each glycosylated (N-linked (GlcNAc...) asparagine; by host). A helical transmembrane segment spans residues 747 to 767; the sequence is VIPIACIFGLLLLTLLIVIIF. The Protein kinase 1 domain occupies 786-1049; sequence LEIGETLGTG…EIMTRLSNIL (264 aa). Residues 792–800 and lysine 813 contribute to the ATP site; that span reads LGTGGYGEV. Aspartate 908 functions as the Proton acceptor in the catalytic mechanism. Residues 1054–1093 show a composition bias toward low complexity; it reads NMTSGTSSSSLSSGGIGKSITDSKSSNSRSSVESSNTSNT. Positions 1054–1101 are disordered; sequence NMTSGTSSSSLSSGGIGKSITDSKSSNSRSSVESSNTSNTFRGIDRHN. Positions 1109 to 1252 constitute a Guanylate cyclase domain; sequence TVAFIDIISA…STVNITGKIT (144 aa). The 252-residue stretch at 1364–1615 folds into the Protein kinase 2 domain; the sequence is ISIGKQIGLG…MTEVVQQLML (252 aa). Residues 1370–1378 and lysine 1391 contribute to the ATP site; that span reads IGLGSYGIV. Aspartate 1487 serves as the catalytic Proton acceptor.

The protein localises to the membrane. The catalysed reaction is L-seryl-[protein] + ATP = O-phospho-L-seryl-[protein] + ADP + H(+). It catalyses the reaction L-threonyl-[protein] + ATP = O-phospho-L-threonyl-[protein] + ADP + H(+). The protein is Putative serine/threonine-protein kinase/receptor R831 of Acanthamoeba polyphaga (Amoeba).